We begin with the raw amino-acid sequence, 1335 residues long: Xanthine dehydrogenase/oxidase (1335 aa).

Positions Asp-7 to Ile-94 constitute a 2Fe-2S ferredoxin-type domain. [2Fe-2S] cluster contacts are provided by Cys-46, Cys-51, Cys-54, Cys-76, Cys-115, Cys-118, Cys-150, and Cys-152. Residues Phe-231–Lys-416 enclose the FAD-binding PCMH-type domain. FAD-binding positions include Leu-259–Ile-266, Phe-339, Ser-349–Asn-353, Asp-362, Leu-406, and Lys-424. Cys-538 and Cys-995 are oxidised to a cystine. Positions 770 and 801 each coordinate Mo-molybdopterin. Substrate is bound by residues Glu-805 and Arg-883. Arg-915 contributes to the Mo-molybdopterin binding site. Substrate is bound by residues Phe-917 and Thr-1013. Ala-1082 contacts Mo-molybdopterin. The active-site Proton acceptor is the Glu-1264.

Belongs to the xanthine dehydrogenase family. In terms of assembly, homodimer. Interacts with BTN1A1. FAD serves as cofactor. Mo-molybdopterin is required as a cofactor. The cofactor is [2Fe-2S] cluster. Post-translationally, subject to partial proteolysis; this alters the enzyme from the dehydrogenase form (D) to the oxidase form (O). In terms of processing, contains sulfhydryl groups that are easily oxidized (in vitro); this alters the enzyme from the dehydrogenase form (D) to the oxidase form (O).

The protein resides in the cytoplasm. The protein localises to the peroxisome. Its subcellular location is the secreted. It catalyses the reaction xanthine + NAD(+) + H2O = urate + NADH + H(+). It carries out the reaction hypoxanthine + NAD(+) + H2O = xanthine + NADH + H(+). The catalysed reaction is xanthine + O2 + H2O = urate + H2O2. With respect to regulation, can be converted from the dehydrogenase form (D) to the oxidase form (O) irreversibly by proteolysis or reversibly through the oxidation of sulfhydryl groups. Its function is as follows. Key enzyme in purine degradation. Catalyzes the oxidation of hypoxanthine to xanthine. Catalyzes the oxidation of xanthine to uric acid. Contributes to the generation of reactive oxygen species. The polypeptide is Xanthine dehydrogenase/oxidase (Xdh) (Mus musculus (Mouse)).